We begin with the raw amino-acid sequence, 217 residues long: Elongation factor Ts (217 aa).

The tract at residues 82 to 85 is involved in Mg(2+) ion dislocation from EF-Tu; sequence TDFV.

It belongs to the EF-Ts family.

The protein localises to the cytoplasm. Associates with the EF-Tu.GDP complex and induces the exchange of GDP to GTP. It remains bound to the aminoacyl-tRNA.EF-Tu.GTP complex up to the GTP hydrolysis stage on the ribosome. This chain is Elongation factor Ts, found in Synechococcus sp. (strain RCC307).